The following is a 452-amino-acid chain: MSTTFPGLVHDAEIRHDGSNSYRLMQLGCLESVANSTVAYSSSSPLTYSTTGTEFASPYFSTNHQYTPLHHQSFHYEFQHSHPAVTPDAYSLNSLHHSQQYYQQIHHGEPTDFINLHNARALKSSCLDEQRRELGCLDAYRRHDLSLMSHGSQYGMHPDQRLLPGPSLGLAAAGADDLQGSVEAQCGIVLNGQGGVIRRGGTCVVNPTDLFCSVPGRLSLLSSTSKYKVTIAEVKRRLSPPECLNASLLGGILRRAKSKNGGRCLREKLDRLGLNLPAGRRKAANVTLLTSLVEGEALHLARDFGYTCETEFPAKAVGEHLARQHMEQKEQTARKKMILATKQICKEFQDLLSQDRSPLGSSRPTPILDLDIQRHLTHFSLITHGFGTPAICAALSTFQTVLSEMLNYLEKHTTHKNGGAADSGQGHANSEKAPLRKASEAAVKEGKTEKTD.

At Ser-239 the chain carries Phosphoserine; by PKA. Residues 280 to 410 are H-S-H (helix-span-helix), dimerization; the sequence is RRKAANVTLL…VLSEMLNYLE (131 aa). Residues 416 to 452 are disordered; the sequence is KNGGAADSGQGHANSEKAPLRKASEAAVKEGKTEKTD. Residues 429-452 are compositionally biased toward basic and acidic residues; it reads NSEKAPLRKASEAAVKEGKTEKTD.

The protein belongs to the AP-2 family. In terms of assembly, binds DNA as a dimer. Can form homodimers or heterodimers with other AP-2 family members. Expressed in both embryonic and newborn brain.

It is found in the nucleus. Sequence-specific DNA-binding protein that interacts with inducible viral and cellular enhancer elements to regulate transcription of selected genes. AP-2 factors bind to the consensus sequence 5'-GCCNNNGGC-3' and activate genes involved in a large spectrum of important biological functions including proper eye, face, body wall, limb and neural tube development. They also suppress a number of genes including MCAM/MUC18, C/EBP alpha and MYC. The chain is Transcription factor AP-2-delta (Tfap2d) from Mus musculus (Mouse).